Reading from the N-terminus, the 551-residue chain is RanBD1 domain-containing protein C584.03c (551 aa).

Residues Met-1 to Thr-309 enclose the RanBD1 domain. The residue at position 441 (Ser-441) is a Phosphoserine. The segment at Ser-522–Pro-551 is disordered.

It localises to the nucleus. The protein is RanBD1 domain-containing protein C584.03c of Schizosaccharomyces pombe (strain 972 / ATCC 24843) (Fission yeast).